Here is a 238-residue protein sequence, read N- to C-terminus: Cysteine-rich venom protein 1 (238 aa).

A signal peptide spans 1–19 (MIAFIVLLSLAAVLQQSSG). Residues 38-164 (VDKHNALRRS…STKYLYVCQY (127 aa)) form the SCP domain. Disulfide bonds link cysteine 75/cysteine 153, cysteine 92/cysteine 165, cysteine 148/cysteine 162, cysteine 184/cysteine 191, cysteine 187/cysteine 196, cysteine 200/cysteine 233, cysteine 209/cysteine 227, and cysteine 218/cysteine 231. The region spanning 200–233 (CEYEDTFSNCKALAKKTKCKTEWIKSKCPATCFC) is the ShKT domain.

The protein belongs to the CRISP family. In terms of tissue distribution, expressed by the venom gland.

The protein resides in the secreted. Its function is as follows. Blocks contraction of smooth muscle elicited by high potassium-induced depolarization, but does not block caffeine-stimulated contraction. May target voltage-gated calcium channels on smooth muscle. This Hydrophis hardwickii (Hardwick's spine-bellied seasnake) protein is Cysteine-rich venom protein 1.